Consider the following 104-residue polypeptide: Replication restart protein PriB (104 aa).

Residues 1–101 form the SSB domain; sequence MTNRLALSGT…LHAEQIELID (101 aa).

It belongs to the PriB family. Homodimer. Interacts with PriA and DnaT. Component of the replication restart primosome. Primosome assembly occurs via a 'hand-off' mechanism. PriA binds to replication forks, subsequently PriB then DnaT bind; DnaT then displaces ssDNA to generate the helicase loading substrate.

Involved in the restart of stalled replication forks, which reloads the replicative helicase on sites other than the origin of replication; the PriA-PriB pathway is the major replication restart pathway. During primosome assembly it facilitates complex formation between PriA and DnaT on DNA; stabilizes PriA on DNA. Stimulates the DNA unwinding activity of PriA helicase. This is Replication restart protein PriB from Salmonella agona (strain SL483).